The chain runs to 777 residues: Ribosome-releasing factor 2, mitochondrial (777 aa).

The tr-type G domain maps to 68–353; that stretch reads AKIRNIGIMA…AITMYLPSPE (286 aa). Residues 77–84, 141–145, and 195–198 contribute to the GTP site; these read AHIDAGKT, DTPGH, and NKMD.

Belongs to the TRAFAC class translation factor GTPase superfamily. Classic translation factor GTPase family. EF-G/EF-2 subfamily.

The protein localises to the mitochondrion. It carries out the reaction GTP + H2O = GDP + phosphate + H(+). Functionally, mitochondrial GTPase that mediates the disassembly of ribosomes from messenger RNA at the termination of mitochondrial protein biosynthesis. Acts in collaboration with MRRF. GTP hydrolysis follows the ribosome disassembly and probably occurs on the ribosome large subunit. Not involved in the GTP-dependent ribosomal translocation step during translation elongation. This chain is Ribosome-releasing factor 2, mitochondrial, found in Bos taurus (Bovine).